Reading from the N-terminus, the 542-residue chain is Signal peptide peptidase-like 5 (542 aa).

Positions 1–23 (MAAATAAVFALLMASALAGAAAG) are cleaved as a signal peptide. The Lumenal segment spans residues 24–192 (GDIVHHDDEA…PDRPVVDTAE (169 aa)). N-linked (GlcNAc...) asparagine glycans are attached at residues asparagine 79 and asparagine 145. Residues 92 to 167 (CTSPKEKVSG…LPRDAGFALH (76 aa)) enclose the PA domain. A helical membrane pass occupies residues 193–213 (VFLWLMAVGTVLCASYWSAWS). Residues 214–245 (AREALCEQEKLLKDGREVLLNVENGSSSGMID) are Cytoplasmic-facing. The chain crosses the membrane as a helical span at residues 246–266 (INVASAIMFVVVASCFLIMLY). The Lumenal segment spans residues 267 to 275 (KMMSSWFVE). The helical transmembrane segment at 276–296 (LLVVIFCVGGVEGLQTCLVAL) threads the bilayer. Residues 297 to 316 (LSRWFRAASESFFKVPFFGA) are Cytoplasmic-facing. A helical membrane pass occupies residues 317 to 337 (VSYLTLAVSPFCIVFAVLWAV). The Lumenal segment spans residues 338–342 (HRHFT). Residues 343–363 (YAWIGQDILGIALIITVIQIV) form a helical membrane-spanning segment. Over 364-367 (RVPN) the chain is Cytoplasmic. A helical membrane pass occupies residues 368–388 (LKVGSVLLSCAFFYDIFWVFV). Residue aspartate 382 is part of the active site. The Lumenal portion of the chain corresponds to 389-426 (SKRWFHESVMIVVARGDKTDEDGVPMLLKIPRMFDPWG). The helical transmembrane segment at 427 to 447 (GYSIIGFGDILLPGLLVAFAL) threads the bilayer. Aspartate 435 is an active-site residue. The Cytoplasmic segment spans residues 448–459 (RYDWAAKKSLQT). A helical membrane pass occupies residues 460 to 480 (GYFLWSMVAYGSGLLITYVAL). Residues 481–486 (NLMDGH) lie on the Lumenal side of the membrane. A helical transmembrane segment spans residues 487-507 (GQPALLYIVPFTLGALISLGW). The PAL signature appears at 489–491 (PAL). Over 508-542 (KRGELWNLWSKGEPERVCPHHMHMQPQPKTPPLVQ) the chain is Cytoplasmic.

It belongs to the peptidase A22B family. In terms of processing, glycosylated.

It localises to the endosome membrane. Intramembrane-cleaving aspartic protease (I-CLiP) that cleaves type II membrane signal peptides in the hydrophobic plane of the membrane. This chain is Signal peptide peptidase-like 5 (SPPL5), found in Oryza sativa subsp. japonica (Rice).